Reading from the N-terminus, the 276-residue chain is ATP synthase subunit a (276 aa).

Helical transmembrane passes span 47-67 (WHIDSLLFSVGLGVLFLWLFY), 107-127 (IAPLGLTIFVWVFLMNLMDLI), 152-172 (DLNVTLGLALSVFALIVFYSI), 188-208 (PFNHWALIPINFVLETVTLVA), 226-246 (LIFILIALMPWWAQFALSVPW), and 247-267 (AIFHILVIVLQAFIFMMLTIV).

The protein belongs to the ATPase A chain family. In terms of assembly, F-type ATPases have 2 components, CF(1) - the catalytic core - and CF(0) - the membrane proton channel. CF(1) has five subunits: alpha(3), beta(3), gamma(1), delta(1), epsilon(1). CF(0) has three main subunits: a(1), b(2) and c(9-12). The alpha and beta chains form an alternating ring which encloses part of the gamma chain. CF(1) is attached to CF(0) by a central stalk formed by the gamma and epsilon chains, while a peripheral stalk is formed by the delta and b chains.

The protein localises to the cell inner membrane. Its function is as follows. Key component of the proton channel; it plays a direct role in the translocation of protons across the membrane. This is ATP synthase subunit a from Shewanella pealeana (strain ATCC 700345 / ANG-SQ1).